The following is a 637-amino-acid chain: Probable potassium transport system protein Kup (637 aa).

A run of 12 helical transmembrane segments spans residues 24 to 44, 64 to 84, 113 to 133, 151 to 171, 182 to 202, 225 to 245, 261 to 281, 290 to 310, 351 to 371, 381 to 401, 409 to 429, and 433 to 453; these read LAIAAIGVVFGDIGTSPLYAL, VISLLFWAIILVVGIKYLLFV, AGALMALGIFGACMFYGDAVI, PHLSHLVLPITIVILIALFWI, LFGPIMVVWFIVIAALGVYHI, LLQAYVVLGSVVLVLTGAEAL, AYGLVMPSLVLNYFGQGALLI, PFFLLAPEWGLLPLVVLSTVA, IYVPVVNWLLLFVILCIVIGF, YGIAVTATMVITTVLACVVMV, LLVGAIIAVFLAIDLGFFGAN, and VAQGGWLPLGIGALLFFLLMT.

It belongs to the HAK/KUP transporter (TC 2.A.72) family.

The protein resides in the cell inner membrane. It carries out the reaction K(+)(in) + H(+)(in) = K(+)(out) + H(+)(out). Transport of potassium into the cell. Likely operates as a K(+):H(+) symporter. In Burkholderia ambifaria (strain ATCC BAA-244 / DSM 16087 / CCUG 44356 / LMG 19182 / AMMD) (Burkholderia cepacia (strain AMMD)), this protein is Probable potassium transport system protein Kup.